An 814-amino-acid chain; its full sequence is Immunoglobulin superfamily DCC subclass member 3 (814 aa).

The N-terminal stretch at 1 to 35 (MAVQRAASPRRPPAPLWPRLLLPLLLLLLPAPSEG) is a signal peptide. Ig-like C2-type domains lie at 36 to 139 (LGHS…ATMS), 140 to 220 (DFHV…IRIS), 238 to 321 (PAIL…RTAQ), and 329 to 416 (PAEF…ARLT). Intrachain disulfides connect cysteine 63/cysteine 117 and cysteine 160/cysteine 209. N-linked (GlcNAc...) asparagine glycosylation is present at asparagine 93. N-linked (GlcNAc...) asparagine glycosylation occurs at asparagine 246. Disulfide bonds link cysteine 259–cysteine 307 and cysteine 351–cysteine 400. 2 N-linked (GlcNAc...) asparagine glycosylation sites follow: asparagine 381 and asparagine 382. Fibronectin type-III domains lie at 426–520 (PPRN…TLGE) and 523–618 (APPP…ASER). N-linked (GlcNAc...) asparagine glycosylation is found at asparagine 580, asparagine 604, and asparagine 634. A helical membrane pass occupies residues 641–661 (IVIGIHIGVTCIIFCVLFLLF). 2 disordered regions span residues 722–743 (PPASAAGQPDPRPTQDPAAPAP) and 762–814 (GKTT…HSEQ). Over residues 770 to 781 (TEATAPCAGLAA) the composition is skewed to low complexity.

Belongs to the immunoglobulin superfamily. DCC family.

Its subcellular location is the membrane. This is Immunoglobulin superfamily DCC subclass member 3 (IGDCC3) from Homo sapiens (Human).